A 222-amino-acid polypeptide reads, in one-letter code: UPF0173 metal-dependent hydrolase Nther_2337 (222 aa).

It belongs to the UPF0173 family.

In Natranaerobius thermophilus (strain ATCC BAA-1301 / DSM 18059 / JW/NM-WN-LF), this protein is UPF0173 metal-dependent hydrolase Nther_2337.